The sequence spans 307 residues: Transcription factor bHLH127 (307 aa).

2 disordered regions span residues serine 41–glutamine 68 and proline 101–histidine 155. Residues alanine 110–serine 119 are compositionally biased toward pro residues. Positions arginine 150–leucine 199 constitute a bHLH domain.

The protein belongs to the bHLH protein family. In terms of assembly, homodimer.

Its subcellular location is the nucleus. This chain is Transcription factor bHLH127 (BHLH127), found in Arabidopsis thaliana (Mouse-ear cress).